The chain runs to 472 residues: Uronate isomerase (472 aa).

It belongs to the metallo-dependent hydrolases superfamily. Uronate isomerase family.

The catalysed reaction is D-glucuronate = D-fructuronate. It catalyses the reaction aldehydo-D-galacturonate = keto-D-tagaturonate. Its pathway is carbohydrate metabolism; pentose and glucuronate interconversion. This Xanthomonas oryzae pv. oryzae (strain MAFF 311018) protein is Uronate isomerase.